The sequence spans 248 residues: Probable transcriptional regulatory protein Avi_3631 (248 aa).

The protein belongs to the TACO1 family.

It localises to the cytoplasm. This chain is Probable transcriptional regulatory protein Avi_3631, found in Allorhizobium ampelinum (strain ATCC BAA-846 / DSM 112012 / S4) (Agrobacterium vitis (strain S4)).